A 448-amino-acid chain; its full sequence is Ribulose bisphosphate carboxylase large chain (448 aa).

The propeptide occupies 1–2 (MS). Proline 3 is modified (N-acetylproline). An N6,N6,N6-trimethyllysine modification is found at lysine 14. 2 residues coordinate substrate: asparagine 122 and threonine 172. The active-site Proton acceptor is the lysine 174. Lysine 176 is a substrate binding site. 3 residues coordinate Mg(2+): lysine 200, aspartate 202, and glutamate 203. Lysine 200 is subject to N6-carboxylysine. Histidine 293 functions as the Proton acceptor in the catalytic mechanism. Residues arginine 294, histidine 326, and serine 378 each coordinate substrate.

The protein belongs to the RuBisCO large chain family. Type I subfamily. In terms of assembly, heterohexadecamer of 8 large chains and 8 small chains; disulfide-linked. The disulfide link is formed within the large subunit homodimers. The cofactor is Mg(2+). The disulfide bond which can form in the large chain dimeric partners within the hexadecamer appears to be associated with oxidative stress and protein turnover.

The protein localises to the plastid. Its subcellular location is the chloroplast. It catalyses the reaction 2 (2R)-3-phosphoglycerate + 2 H(+) = D-ribulose 1,5-bisphosphate + CO2 + H2O. The catalysed reaction is D-ribulose 1,5-bisphosphate + O2 = 2-phosphoglycolate + (2R)-3-phosphoglycerate + 2 H(+). Functionally, ruBisCO catalyzes two reactions: the carboxylation of D-ribulose 1,5-bisphosphate, the primary event in carbon dioxide fixation, as well as the oxidative fragmentation of the pentose substrate in the photorespiration process. Both reactions occur simultaneously and in competition at the same active site. In Dichapetalum crassifolium, this protein is Ribulose bisphosphate carboxylase large chain.